Reading from the N-terminus, the 115-residue chain is Large ribosomal subunit protein bL20 (115 aa).

Belongs to the bacterial ribosomal protein bL20 family.

In terms of biological role, binds directly to 23S ribosomal RNA and is necessary for the in vitro assembly process of the 50S ribosomal subunit. It is not involved in the protein synthesizing functions of that subunit. The protein is Large ribosomal subunit protein bL20 of Synechococcus sp. (strain WH7803).